We begin with the raw amino-acid sequence, 180 residues long: Adenine phosphoribosyltransferase (180 aa).

It belongs to the purine/pyrimidine phosphoribosyltransferase family. Homodimer.

The protein localises to the cytoplasm. The catalysed reaction is AMP + diphosphate = 5-phospho-alpha-D-ribose 1-diphosphate + adenine. It functions in the pathway purine metabolism; AMP biosynthesis via salvage pathway; AMP from adenine: step 1/1. Catalyzes a salvage reaction resulting in the formation of AMP, that is energically less costly than de novo synthesis. The polypeptide is Adenine phosphoribosyltransferase (Mycolicibacterium paratuberculosis (strain ATCC BAA-968 / K-10) (Mycobacterium paratuberculosis)).